The following is a 132-amino-acid chain: Large-conductance mechanosensitive channel (132 aa).

3 helical membrane passes run valine 14–leucine 34, isoleucine 38–threonine 58, and phenylalanine 69–valine 89.

Belongs to the MscL family. In terms of assembly, homopentamer.

The protein resides in the cell membrane. Channel that opens in response to stretch forces in the membrane lipid bilayer. May participate in the regulation of osmotic pressure changes within the cell. The chain is Large-conductance mechanosensitive channel from Bacillus thuringiensis (strain Al Hakam).